Reading from the N-terminus, the 137-residue chain is Phospholipase A2 homolog PLA2-03 (137 aa).

Residues 1 to 16 (MRTLWIVAVLLVGVEG) form the signal peptide. Intrachain disulfides connect C42-C131, C44-C60, C59-C111, C65-C137, C66-C104, C73-C97, and C91-C102. The interval 121 to 133 (KKYKIFPKFLCKK) is important for membrane-damaging activities in eukaryotes and bacteria; heparin-binding.

It belongs to the phospholipase A2 family. Group II subfamily. K49 sub-subfamily. As to expression, expressed by the venom gland.

The protein localises to the secreted. Functionally, snake venom phospholipase A2 homolog that lacks enzymatic activity. Is myotoxic and displays edema-inducing activities in mouse paw. A model of myotoxic mechanism has been proposed: an apo Lys49-PLA2 is activated by the entrance of a hydrophobic molecule (e.g. fatty acid) at the hydrophobic channel of the protein leading to a reorientation of a monomer. This reorientation causes a transition between 'inactive' to 'active' states, causing alignment of C-terminal and membrane-docking sites (MDoS) side-by-side and putting the membrane-disruption sites (MDiS) in the same plane, exposed to solvent and in a symmetric position for both monomers. The MDoS region stabilizes the toxin on membrane by the interaction of charged residues with phospholipid head groups. Subsequently, the MDiS region destabilizes the membrane with penetration of hydrophobic residues. This insertion causes a disorganization of the membrane, allowing an uncontrolled influx of ions (i.e. calcium and sodium), and eventually triggering irreversible intracellular alterations and cell death. This chain is Phospholipase A2 homolog PLA2-03, found in Ovophis okinavensis (Ryukyu Island pit viper).